Here is a 186-residue protein sequence, read N- to C-terminus: Peptidyl-tRNA hydrolase (186 aa).

Position 14 (Tyr14) interacts with tRNA. The active-site Proton acceptor is His19. Residues Phe64, Asn66, and Asn112 each coordinate tRNA.

Belongs to the PTH family. As to quaternary structure, monomer.

It localises to the cytoplasm. The enzyme catalyses an N-acyl-L-alpha-aminoacyl-tRNA + H2O = an N-acyl-L-amino acid + a tRNA + H(+). Hydrolyzes ribosome-free peptidyl-tRNAs (with 1 or more amino acids incorporated), which drop off the ribosome during protein synthesis, or as a result of ribosome stalling. In terms of biological role, catalyzes the release of premature peptidyl moieties from peptidyl-tRNA molecules trapped in stalled 50S ribosomal subunits, and thus maintains levels of free tRNAs and 50S ribosomes. The polypeptide is Peptidyl-tRNA hydrolase (Mycoplasma capricolum subsp. capricolum (strain California kid / ATCC 27343 / NCTC 10154)).